Reading from the N-terminus, the 344-residue chain is L-rhamnose-proton symporter (344 aa).

10 consecutive transmembrane segments (helical) span residues 4–24 (AITMGIFWHLIGAASAACFYA), 38–58 (WSVGGIVSWLILPWTISALLL), 68–88 (FNLSTLLPVFLFGAMWGIGNI), 101–121 (MGIGIAIGITLIVGTLMTPII), 137–157 (TLLGVFVALIGVGIVTRAGQL), 175–195 (LLLAVMCGIFSAGMSFAMNAA), 214–234 (LPSYVVIMGGGALVNLGFCFI), 259–279 (ILLSALGGLMWYLQFFFYAWG), 290–310 (MSWMLHMSFYVLCGGLVGLVL), and 321–341 (VAVLSLGCVVIIIAANIVGLG).

The protein belongs to the L-rhamnose transporter (TC 2.A.7.6) family.

Its subcellular location is the cell inner membrane. The catalysed reaction is L-rhamnopyranose(in) + H(+)(in) = L-rhamnopyranose(out) + H(+)(out). In terms of biological role, uptake of L-rhamnose across the cytoplasmic membrane with the concomitant transport of protons into the cell (symport system). In Salmonella agona (strain SL483), this protein is L-rhamnose-proton symporter.